Here is a 159-residue protein sequence, read N- to C-terminus: ATP synthase subunit b (159 aa).

The chain crosses the membrane as a helical span at residues 7–27; that stretch reads TFVWTIINFLLLLVVLSYFLF.

This sequence belongs to the ATPase B chain family. F-type ATPases have 2 components, F(1) - the catalytic core - and F(0) - the membrane proton channel. F(1) has five subunits: alpha(3), beta(3), gamma(1), delta(1), epsilon(1). F(0) has three main subunits: a(1), b(2) and c(10-14). The alpha and beta chains form an alternating ring which encloses part of the gamma chain. F(1) is attached to F(0) by a central stalk formed by the gamma and epsilon chains, while a peripheral stalk is formed by the delta and b chains.

It is found in the cell membrane. In terms of biological role, f(1)F(0) ATP synthase produces ATP from ADP in the presence of a proton or sodium gradient. F-type ATPases consist of two structural domains, F(1) containing the extramembraneous catalytic core and F(0) containing the membrane proton channel, linked together by a central stalk and a peripheral stalk. During catalysis, ATP synthesis in the catalytic domain of F(1) is coupled via a rotary mechanism of the central stalk subunits to proton translocation. Functionally, component of the F(0) channel, it forms part of the peripheral stalk, linking F(1) to F(0). The sequence is that of ATP synthase subunit b from Clostridium novyi (strain NT).